Reading from the N-terminus, the 188-residue chain is Peroxynitrite isomerase (188 aa).

A GXWXGXG motif is present at residues 35–41 (GTWRGEG). Residue His-178 coordinates heme b.

It belongs to the nitrobindin family. As to quaternary structure, homodimer. Heme b serves as cofactor.

The enzyme catalyses peroxynitrite = nitrate. The protein operates within nitrogen metabolism. Heme-binding protein able to scavenge peroxynitrite and to protect free L-tyrosine against peroxynitrite-mediated nitration, by acting as a peroxynitrite isomerase that converts peroxynitrite to nitrate. Therefore, this protein likely plays a role in peroxynitrite sensing and in the detoxification of reactive nitrogen and oxygen species (RNS and ROS, respectively). Is able to bind nitric oxide (NO) in vitro, but may act as a sensor of peroxynitrite levels in vivo. This is Peroxynitrite isomerase from Frankia casuarinae (strain DSM 45818 / CECT 9043 / HFP020203 / CcI3).